Consider the following 251-residue polypeptide: Ubiquinone/menaquinone biosynthesis C-methyltransferase UbiE (251 aa).

S-adenosyl-L-methionine is bound by residues Thr74, Asp95, 123–124, and Ser140; that span reads NA.

It belongs to the class I-like SAM-binding methyltransferase superfamily. MenG/UbiE family.

The enzyme catalyses a 2-demethylmenaquinol + S-adenosyl-L-methionine = a menaquinol + S-adenosyl-L-homocysteine + H(+). It carries out the reaction a 2-methoxy-6-(all-trans-polyprenyl)benzene-1,4-diol + S-adenosyl-L-methionine = a 5-methoxy-2-methyl-3-(all-trans-polyprenyl)benzene-1,4-diol + S-adenosyl-L-homocysteine + H(+). It participates in quinol/quinone metabolism; menaquinone biosynthesis; menaquinol from 1,4-dihydroxy-2-naphthoate: step 2/2. The protein operates within cofactor biosynthesis; ubiquinone biosynthesis. Methyltransferase required for the conversion of demethylmenaquinol (DMKH2) to menaquinol (MKH2) and the conversion of 2-polyprenyl-6-methoxy-1,4-benzoquinol (DDMQH2) to 2-polyprenyl-3-methyl-6-methoxy-1,4-benzoquinol (DMQH2). In Yersinia pestis bv. Antiqua (strain Antiqua), this protein is Ubiquinone/menaquinone biosynthesis C-methyltransferase UbiE.